We begin with the raw amino-acid sequence, 221 residues long: Pre-rRNA-processing protein SRD1 (221 aa).

Over residues serine 101 to asparagine 110 the composition is skewed to polar residues. Disordered regions lie at residues serine 101 to asparagine 121 and alanine 137 to proline 161. Basic residues predominate over residues lysine 142–lysine 155. The segment at cysteine 168–cysteine 193 adopts a GATA-type zinc-finger fold. The tract at residues leucine 201 to proline 221 is disordered. Residues lysine 203–proline 221 show a composition bias toward basic and acidic residues.

Its subcellular location is the cytoplasm. The protein resides in the nucleus. Functionally, plays a direct or indirect role in pre-rRNA processing. The chain is Pre-rRNA-processing protein SRD1 (SRD1) from Saccharomyces cerevisiae (strain ATCC 204508 / S288c) (Baker's yeast).